A 507-amino-acid chain; its full sequence is ATP synthase subunit alpha, chloroplastic (507 aa).

170–177 (GDRQTGKT) contacts ATP.

This sequence belongs to the ATPase alpha/beta chains family. As to quaternary structure, F-type ATPases have 2 components, CF(1) - the catalytic core - and CF(0) - the membrane proton channel. CF(1) has five subunits: alpha(3), beta(3), gamma(1), delta(1), epsilon(1). CF(0) has four main subunits: a, b, b' and c.

The protein resides in the plastid. Its subcellular location is the chloroplast thylakoid membrane. The catalysed reaction is ATP + H2O + 4 H(+)(in) = ADP + phosphate + 5 H(+)(out). Produces ATP from ADP in the presence of a proton gradient across the membrane. The alpha chain is a regulatory subunit. This Cucumis sativus (Cucumber) protein is ATP synthase subunit alpha, chloroplastic.